A 73-amino-acid polypeptide reads, in one-letter code: uncharacterized protein (73 aa).

A signal peptide spans 1–23 (MLHLIKMVSKIVLLITLVFIVSA).

This is an uncharacterized protein from Acheta domesticus (House cricket).